The primary structure comprises 512 residues: Rab11 family-interacting protein 2 (512 aa).

The C2 domain maps to 1–120; that stretch reads MMLSEQAQKW…DKQRRKTEWF (120 aa). The interval 15 to 102 is necessary for its cellular translocation to the plasma membrane; sequence VQVTVLQAKD…GLDKFLGQVA (88 aa). Disordered stretches follow at residues 169 to 239 and 262 to 285; these read DKMK…MSSE and VPESGSLKSPHRRTLSFDTSKMNQ. The span at 178 to 188 shows a compositional bias: polar residues; that stretch reads GTFSDTSSAII. The span at 226-236 shows a compositional bias: low complexity; sequence HSMSDLSGSHM. At serine 227 the chain carries Phosphoserine; by MARK2. Serine 277 is modified (phosphoserine). Positions 323–325 match the NPF 1 motif; it reads NPF. The span at 361 to 374 shows a compositional bias: basic and acidic residues; sequence ERVTGKKDSRRSDK. Positions 361-392 are disordered; the sequence is ERVTGKKDSRRSDKLNNGGSDSPCDLKSPNAF. 2 consecutive short sequence motifs (NPF) follow at residues 406–408 and 440–442; these read NPF. One can recognise an FIP-RBD domain in the interval 437–499; the sequence is PDSNPFDATA…EETPSILRVP (63 aa). The segment at 465 to 512 is necessary for interaction with AP2A1, RAB11A, subcellular location, endocytosis activity and homooligomerization; sequence ELLRRKDTHIRELEDYIDNLLVRVMEETPSILRVPYEPSRKAGKFSNS.

Homooligomerizes in a Rab11-independent manner. Forms a heterooligomeric complex with RAB11FIP4. Interacts with AP2A1, MYO5B, RAB25 and REPS1. Interacts with RAB11A and RAB11B (activated GTP-bound form). Interacts with NPC1L1. Interacts (via NPF motifs) with EHD1 and EHD3. Interacts with TICAM2; this interaction directs RAB11FIP2 to the phagosome. Interacts with RAB14 and RAB25 (GTP-bound forms). Phosphorylation at Ser-227 by MARK2 regulates epithelial cell polarity.

Its subcellular location is the cell projection. It localises to the phagocytic cup. The protein resides in the cell membrane. The protein localises to the recycling endosome membrane. Its function is as follows. A Rab11 effector binding preferentially phosphatidylinositol 3,4,5-trisphosphate (PtdInsP3) and phosphatidic acid (PA) and acting in the regulation of the transport of vesicles from the endosomal recycling compartment (ERC) to the plasma membrane. Involved in insulin granule exocytosis. Also involved in receptor-mediated endocytosis and membrane trafficking of recycling endosomes, probably originating from clathrin-coated vesicles. Required in a complex with MYO5B and RAB11 for the transport of NPC1L1 to the plasma membrane. Also acts as a regulator of cell polarity. Plays an essential role in phagocytosis through a mechanism involving TICAM2, RAC1 and CDC42 Rho GTPases for controlling actin-dynamics. The sequence is that of Rab11 family-interacting protein 2 (RAB11FIP2) from Homo sapiens (Human).